The sequence spans 866 residues: Protein SEY1 (866 aa).

At 1-746 (MVSNGHFAYA…KRSAIGGMTQ (746 aa)) the chain is on the cytoplasmic side. In terms of domain architecture, GB1/RHD3-type G spans 48–305 (GFNYHLISVF…IPADGFAVYA (258 aa)). 58 to 65 (GSQSTGKS) lines the GTP pocket. The stretch at 480–506 (SNYTQELALYQKDLEKISAQLRKDEMR) forms a coiled coil. Residues 747-767 (IPVYFYILLLALGWNEIIAVL) traverse the membrane as a helical segment. The Lumenal portion of the chain corresponds to 768–770 (RNP). Residues 771 to 791 (VYFFMLFLCSVAAYIIYQLNL) traverse the membrane as a helical segment. Over 792 to 866 (WGPMVKMAEA…DDEVEGEETW (75 aa)) the chain is Cytoplasmic. Residues 840–866 (SHVRSGRNATKINERDDDDEVEGEETW) form a disordered region. Residues 854–866 (RDDDDEVEGEETW) are compositionally biased toward acidic residues.

Belongs to the TRAFAC class dynamin-like GTPase superfamily. GB1/RHD3 GTPase family. RHD3 subfamily.

Its subcellular location is the endoplasmic reticulum membrane. Functionally, cooperates with the reticulon proteins and tubule-shaping DP1 family proteins to generate and maintain the structure of the tubular endoplasmic reticulum network. Has GTPase activity, which is required for its function in ER organization. This is Protein SEY1 from Coccidioides immitis (strain RS) (Valley fever fungus).